Here is a 1302-residue protein sequence, read N- to C-terminus: Regulator of telomere elongation helicase 1 (1302 aa).

The Helicase ATP-binding domain occupies 7-297 (NGVTVDFPFQ…TKTAQQGEPH (291 aa)). ATP is bound at residue 42–49 (SHTGTGKT). Residues cysteine 146, cysteine 164, cysteine 173, and cysteine 208 each coordinate [4Fe-4S] cluster. The Nuclear localization signal motif lies at 152–168 (KKQESNHIQIHLCRKKV). Positions 251–254 (DEAH) match the DEAH box motif. Residues 758 to 767 (PAPAPRATAP) are compositionally biased toward low complexity. The interval 758–819 (PAPAPRATAP…AAGDPESSLC (62 aa)) is disordered. The span at 770–780 (REGEDAVREVK) shows a compositional bias: basic and acidic residues. A Nuclear localization signal motif is present at residues 873–879 (PRGGRKK). 4 disordered regions span residues 981–1006 (RPEH…APDP), 1019–1058 (DPRE…GKQG), 1134–1153 (CTDL…PQEE), and 1160–1234 (VLTH…QAAG). The span at 1178–1187 (KTQSKISSLL) shows a compositional bias: polar residues. A PIP-box motif is present at residues 1180–1187 (QSKISSLL).

This sequence belongs to the helicase family. RAD3/XPD subfamily. Interacts with TERF1. Interacts (via PIP-box) with PCNA; the interaction is direct and essential for suppressing telomere fragility. Interacts with MMS19; the interaction mediates the association of RTEL1 with the cytosolic iron-sulfur protein assembly (CIA) complex.

The protein resides in the nucleus. The enzyme catalyses ATP + H2O = ADP + phosphate + H(+). Functionally, a probable ATP-dependent DNA helicase implicated in telomere-length regulation, DNA repair and the maintenance of genomic stability. Acts as an anti-recombinase to counteract toxic recombination and limit crossover during meiosis. Regulates meiotic recombination and crossover homeostasis by physically dissociating strand invasion events and thereby promotes noncrossover repair by meiotic synthesis dependent strand annealing (SDSA) as well as disassembly of D loop recombination intermediates. Also disassembles T loops and prevents telomere fragility by counteracting telomeric G4-DNA structures, which together ensure the dynamics and stability of the telomere. In Pongo abelii (Sumatran orangutan), this protein is Regulator of telomere elongation helicase 1.